Reading from the N-terminus, the 202-residue chain is uncharacterized protein (202 aa).

The helical transmembrane segment at 10–30 (TAAIFLLCCTSVIILFTIAVV) threads the bilayer.

Belongs to the bacterial sugar transferase family.

It localises to the cell membrane. Its function is as follows. May be involved in the production of the exopolysaccharide (EPS) component of the extracellular matrix during biofilm formation. EPS is responsible for the adhesion of chains of cells into bundles. This is an uncharacterized protein from Bacillus subtilis (strain 168).